Consider the following 202-residue polypeptide: Holliday junction resolvase RecU (202 aa).

Mg(2+) is bound by residues Thr-85, Asp-87, Glu-100, and Gln-119.

This sequence belongs to the RecU family. It depends on Mg(2+) as a cofactor.

The protein localises to the cytoplasm. It carries out the reaction Endonucleolytic cleavage at a junction such as a reciprocal single-stranded crossover between two homologous DNA duplexes (Holliday junction).. Its function is as follows. Endonuclease that resolves Holliday junction intermediates in genetic recombination. Cleaves mobile four-strand junctions by introducing symmetrical nicks in paired strands. Promotes annealing of linear ssDNA with homologous dsDNA. Required for DNA repair, homologous recombination and chromosome segregation. The chain is Holliday junction resolvase RecU from Streptococcus equi subsp. zooepidemicus (strain MGCS10565).